The sequence spans 328 residues: Lipoyl synthase (328 aa).

[4Fe-4S] cluster is bound by residues C56, C61, C67, C82, C86, C89, and S293. The Radical SAM core domain occupies 68 to 282; sequence WEDREATFLI…ERVGAELGFS (215 aa).

It belongs to the radical SAM superfamily. Lipoyl synthase family. It depends on [4Fe-4S] cluster as a cofactor.

The protein resides in the cytoplasm. It catalyses the reaction [[Fe-S] cluster scaffold protein carrying a second [4Fe-4S](2+) cluster] + N(6)-octanoyl-L-lysyl-[protein] + 2 oxidized [2Fe-2S]-[ferredoxin] + 2 S-adenosyl-L-methionine + 4 H(+) = [[Fe-S] cluster scaffold protein] + N(6)-[(R)-dihydrolipoyl]-L-lysyl-[protein] + 4 Fe(3+) + 2 hydrogen sulfide + 2 5'-deoxyadenosine + 2 L-methionine + 2 reduced [2Fe-2S]-[ferredoxin]. Its pathway is protein modification; protein lipoylation via endogenous pathway; protein N(6)-(lipoyl)lysine from octanoyl-[acyl-carrier-protein]: step 2/2. Functionally, catalyzes the radical-mediated insertion of two sulfur atoms into the C-6 and C-8 positions of the octanoyl moiety bound to the lipoyl domains of lipoate-dependent enzymes, thereby converting the octanoylated domains into lipoylated derivatives. This is Lipoyl synthase from Frankia alni (strain DSM 45986 / CECT 9034 / ACN14a).